The chain runs to 232 residues: Nuclear transcription factor Y subunit nfyc-1 (232 aa).

The tract at residues 191–232 is disordered; sequence TVPTTSTNGPGHMSEDSFQDPNMHSDFHQRTSNSSVNRSHHN. Positions 220–232 are enriched in polar residues; it reads RTSNSSVNRSHHN.

Belongs to the NFYC/HAP5 subunit family. As to quaternary structure, forms two NF-Y heterotrimeric transcription factor complexes: the nfya-1-NF-Y complex is composed of nfya-1, nfyb-1 and nfyc-1, and the nfya-2-NF-Y complex is composed of nfya-2, nfyb-1 and nfyc-1. Interacts with nfyb-1; the interaction is direct and is required for the interaction with either nfya-1 or nfya-2, and subsequent binding of the complex to the 5'-CCAAT-3' box motif in DNA. In terms of tissue distribution, expressed in certain parts of the gonads with high expression in fertilized oocytes in the uterus and mature oocytes from the distal to the proximal arm of the gonad, but weak expression in the syncytial ovaries and immature oocytes at the beginning of the proximal arm of the gonad. Expressed in the excretory cell, secretory cells in the pharyngeal terminal bulb wall, in the small ganglia surrounding the pharynx and in the neurons running anteriorly to the sensory organs in the head. Not expressed in the intestine, the hypodermis or body wall muscle surrounding the pseudocoelomic space.

Its subcellular location is the nucleus. The protein localises to the cytoplasm. It localises to the perikaryon. Component of sequence-specific heterotrimeric transcription factor (nfya-1-NF-Y and nfya-2-NF-Y) complexes which specifically recognize a 5'-CCAAT-3' box motif found in the promoters of its target genes to regulate their expression and control cellular identity in particular tissue types. In association with the components in the NF-Y complexes, represses the expression of the T-box transcription factor tbx-2 throughout larval development, which most likely restricts its expression to certain tissues. May act to repress txb-2 expression in conjunction with tbx-2 itself, which has an autoregulatory role. In association with the components in the nfya-1-NF-Y complex, negatively regulates the expression of the homeobox protein egl-5 to spatially restrict its expression in tissues such as the head. May regulate egl-5 expression in association with the mes-2-mes-3-mes-6 complex. In Caenorhabditis elegans, this protein is Nuclear transcription factor Y subunit nfyc-1.